Consider the following 293-residue polypeptide: tRNA pseudouridine synthase B (293 aa).

D39 (nucleophile) is an active-site residue.

The protein belongs to the pseudouridine synthase TruB family. Type 1 subfamily.

It catalyses the reaction uridine(55) in tRNA = pseudouridine(55) in tRNA. Responsible for synthesis of pseudouridine from uracil-55 in the psi GC loop of transfer RNAs. This Rickettsia bellii (strain OSU 85-389) protein is tRNA pseudouridine synthase B.